A 361-amino-acid chain; its full sequence is Chorismate synthase (361 aa).

Positions 48 and 54 each coordinate NADP(+). FMN-binding positions include 125–127 (RSS), 238–239 (NA), Gly-278, 293–297 (KPTSS), and Arg-319.

It belongs to the chorismate synthase family. In terms of assembly, homotetramer. FMNH2 serves as cofactor.

The enzyme catalyses 5-O-(1-carboxyvinyl)-3-phosphoshikimate = chorismate + phosphate. The protein operates within metabolic intermediate biosynthesis; chorismate biosynthesis; chorismate from D-erythrose 4-phosphate and phosphoenolpyruvate: step 7/7. Its function is as follows. Catalyzes the anti-1,4-elimination of the C-3 phosphate and the C-6 proR hydrogen from 5-enolpyruvylshikimate-3-phosphate (EPSP) to yield chorismate, which is the branch point compound that serves as the starting substrate for the three terminal pathways of aromatic amino acid biosynthesis. This reaction introduces a second double bond into the aromatic ring system. The protein is Chorismate synthase of Pectobacterium atrosepticum (strain SCRI 1043 / ATCC BAA-672) (Erwinia carotovora subsp. atroseptica).